The primary structure comprises 487 residues: uncharacterized protein (487 aa).

ABC transporter domains are found at residues 5-249 and 265-487; these read VKFA…IPVK and ISME…VIHA. An ATP-binding site is contributed by 297-304; it reads GSNGSGKT.

The protein belongs to the ABC transporter superfamily.

Its subcellular location is the mitochondrion. This is an uncharacterized protein from Schizosaccharomyces pombe (strain 972 / ATCC 24843) (Fission yeast).